We begin with the raw amino-acid sequence, 399 residues long: Mitochondrial glycine transporter (399 aa).

Solcar repeat units follow at residues 35–137 (IPPY…LRSV), 164–251 (LSTT…CKTN), and 266–374 (GNWM…GRSW). Helical transmembrane passes span 41-66 (LAFG…TRLQ), 112-138 (GTAP…RSVA), 170-195 (LLTG…ARFE), 226-249 (GFTA…EACK), 270-296 (VVSA…KTRM), and 349-367 (GLGL…GWSI). The segment at 379-399 (EASSSAQEAGTGTRLLDHKQV) is disordered.

This sequence belongs to the mitochondrial carrier (TC 2.A.29) family. SLC25A38 subfamily.

It localises to the mitochondrion inner membrane. The enzyme catalyses glycine(in) = glycine(out). Mitochondrial glycine transporter that imports glycine into the mitochondrial matrix. Plays an important role in providing glycine for the first enzymatic step in heme biosynthesis, the condensation of glycine with succinyl-CoA to produce 5-aminolevulinate (ALA) in the mitochondrial matrix. This chain is Mitochondrial glycine transporter, found in Mycosarcoma maydis (Corn smut fungus).